The primary structure comprises 404 residues: Cysteine desulfurase IscS (404 aa).

Pyridoxal 5'-phosphate contacts are provided by residues A75–T76, N155, Q183, and S203–H205. K206 carries the post-translational modification N6-(pyridoxal phosphate)lysine. A pyridoxal 5'-phosphate-binding site is contributed by T243. The active-site Cysteine persulfide intermediate is C328. [2Fe-2S] cluster is bound at residue C328.

It belongs to the class-V pyridoxal-phosphate-dependent aminotransferase family. NifS/IscS subfamily. As to quaternary structure, homodimer. Forms a heterotetramer with IscU, probably interacts with other sulfur acceptors. Requires pyridoxal 5'-phosphate as cofactor.

It localises to the cytoplasm. It carries out the reaction (sulfur carrier)-H + L-cysteine = (sulfur carrier)-SH + L-alanine. It functions in the pathway cofactor biosynthesis; iron-sulfur cluster biosynthesis. Inhibited by equimolar N-iodoacetyl-N'-(5-sulfo-1-naphthyl)ethylenediamine. Functionally, master enzyme that delivers sulfur to a number of partners involved in Fe-S cluster assembly, tRNA modification or cofactor biosynthesis. Catalyzes the removal of elemental sulfur from cysteine to produce alanine via an enzyme-bound persulfide intermediate. Functions as a sulfur delivery protein for Fe-S cluster synthesis. Cluster assembly on IscU homodimers proceeds sequentially from 1 2Fe-2S per dimer, to 2 2Fe-2S per dimer and finally 1 4Fe-4S per dimer. This chain is Cysteine desulfurase IscS, found in Azotobacter vinelandii.